The primary structure comprises 173 residues: Nucleoside-triphosphatase THEP1 (173 aa).

ATP-binding positions include 9-16 (GPPGVGKT) and 97-104 (LYVIDEVG).

The protein belongs to the THEP1 NTPase family.

The enzyme catalyses a ribonucleoside 5'-triphosphate + H2O = a ribonucleoside 5'-diphosphate + phosphate + H(+). Has nucleotide phosphatase activity towards ATP, GTP, CTP, TTP and UTP. May hydrolyze nucleoside diphosphates with lower efficiency. In Caldivirga maquilingensis (strain ATCC 700844 / DSM 13496 / JCM 10307 / IC-167), this protein is Nucleoside-triphosphatase THEP1.